The following is a 560-amino-acid chain: Putative transport protein VV1438 (560 aa).

5 helical membrane-spanning segments follow: residues 5–25 (VVLLLQQNPILLIFVVLAIGL), 37–57 (LGNSIGVLITSLIMGHLGFSF), 66–86 (FMLFIYCVGIEAGPNFFGIFF), 91–111 (HYFTLSMVVLVTAVSISYFAS), and 164–184 (VGYAMAYLVGLISMIMFAKLL). RCK C-terminal domains lie at 203–292 (RGLG…FRNG) and 293–376 (KEVF…RIGF). 6 consecutive transmembrane segments (helical) span residues 386 to 406 (LLAFCSFFILGIMFGLVTMTF), 409 to 429 (VSFSLGNAVGLLLSGITLGFL), 443 to 463 (ALNMVKDLGLMIFMVGIGLSA), 478 to 498 (IIGIAFLVSVVPVFFAYLVGA), 506 to 526 (ALLFGAIIGARTCAPAMDIVN), and 539 to 559 (AGTYAIANILMTLAGTILIIL).

Belongs to the AAE transporter (TC 2.A.81) family. YbjL subfamily.

The protein localises to the cell membrane. The chain is Putative transport protein VV1438 from Vibrio vulnificus (strain YJ016).